A 208-amino-acid polypeptide reads, in one-letter code: MAEKIPKPVSKRLVSYYMCLERLLDEGVEVVSSEELARRLDLKASQIRKDLSYFGEFGKRGVGYNVEHLYDAIGEILGVKKEWKLVVVGAGNIGRAVANYTVMKEKGFRIIGIFDSDPSKIGKEAAPGLTVSDVSELEKFVEEHGVEIGVIAVPAEHAQEIAERLEKAGIKGILNFAPVKIKVSVPVENIDITASLRVLTFEIVRRNS.

Positions 15-54 (SYYMCLERLLDEGVEVVSSEELARRLDLKASQIRKDLSYF) form a DNA-binding region, H-T-H motif. NAD(+) is bound at residue 89-94 (GAGNIG).

The protein belongs to the transcriptional regulatory Rex family. Homodimer.

It is found in the cytoplasm. Its function is as follows. Modulates transcription in response to changes in cellular NADH/NAD(+) redox state. In Thermotoga maritima (strain ATCC 43589 / DSM 3109 / JCM 10099 / NBRC 100826 / MSB8), this protein is Redox-sensing transcriptional repressor Rex 1.